We begin with the raw amino-acid sequence, 184 residues long: Large ribosomal subunit protein uL10 (184 aa).

It belongs to the universal ribosomal protein uL10 family. In terms of assembly, part of the ribosomal stalk of the 50S ribosomal subunit. The N-terminus interacts with L11 and the large rRNA to form the base of the stalk. The C-terminus forms an elongated spine to which L12 dimers bind in a sequential fashion forming a multimeric L10(L12)X complex.

Functionally, forms part of the ribosomal stalk, playing a central role in the interaction of the ribosome with GTP-bound translation factors. In Gluconobacter oxydans (strain 621H) (Gluconobacter suboxydans), this protein is Large ribosomal subunit protein uL10.